The chain runs to 179 residues: Large ribosomal subunit protein uL6 (179 aa).

This sequence belongs to the universal ribosomal protein uL6 family. As to quaternary structure, part of the 50S ribosomal subunit.

Its function is as follows. This protein binds to the 23S rRNA, and is important in its secondary structure. It is located near the subunit interface in the base of the L7/L12 stalk, and near the tRNA binding site of the peptidyltransferase center. This chain is Large ribosomal subunit protein uL6, found in Chlorobium phaeovibrioides (strain DSM 265 / 1930) (Prosthecochloris vibrioformis (strain DSM 265)).